The sequence spans 464 residues: Glycine receptor subunit alpha-3 (464 aa).

An N-terminal signal peptide occupies residues 1–33 (MAHVRHFRTLVSGFYFWEAALLLSLVATKETDS). The Extracellular segment spans residues 34 to 255 (ARSRSAPMSP…RFHLERQMGY (222 aa)). N71 is a glycosylation site (N-linked (GlcNAc...) asparagine). C171 and C185 are joined by a disulfide. Residues E225 and D227 each contribute to the Zn(2+) site. A disulfide bond links C231 and C242. 235 to 240 (YNTGKF) provides a ligand contact to strychnine. Position 248 (H248) interacts with Zn(2+). Residues 256–277 (YLIQMYIPSLLIVILSWVSFWI) traverse the membrane as a helical segment. Residues 278–282 (NMDAA) are Cytoplasmic-facing. Residues 283 to 303 (PARVALGITTVLTMTTQSSGS) form a helical membrane-spanning segment. The Extracellular segment spans residues 304–314 (RASLPKVSYVK). Residues 315-335 (AIDIWMAVCLLFVFSALLEYA) traverse the membrane as a helical segment. The Cytoplasmic portion of the chain corresponds to 336–430 (AVNFVSRQHK…FIDRAKKIDT (95 aa)). 2 positions are modified to phosphoserine: S370 and S379. The helical transmembrane segment at 431 to 451 (ISRACFPLAFLIFNIFYWVIY) threads the bilayer. Residues 452 to 464 (KILRHEDIHQQQD) lie on the Extracellular side of the membrane.

This sequence belongs to the ligand-gated ion channel (TC 1.A.9) family. Glycine receptor (TC 1.A.9.3) subfamily. GLRA3 sub-subfamily. Homopentamer (in vitro). Heteropentamer composed of GLRA3 and GLRB. Both homopentamers and heteropentamers form functional ion channels, but their characteristics are subtly different. In terms of processing, phosphorylated by PKA; this causes down-regulation of channel activity. In terms of tissue distribution, widely distributed throughout the central nervous system.

The protein localises to the postsynaptic cell membrane. It is found in the perikaryon. Its subcellular location is the cell projection. It localises to the dendrite. The protein resides in the synapse. The protein localises to the cell membrane. The enzyme catalyses chloride(in) = chloride(out). Functionally, glycine receptors are ligand-gated chloride channels. Channel opening is triggered by extracellular glycine. Channel characteristics depend on the subunit composition; heteropentameric channels display faster channel closure. Plays an important role in the down-regulation of neuronal excitability. Contributes to the generation of inhibitory postsynaptic currents. Contributes to increased pain perception in response to increased prostaglandin E2 levels. Plays a role in cellular responses to ethanol. The chain is Glycine receptor subunit alpha-3 (GLRA3) from Homo sapiens (Human).